The following is an 86-amino-acid chain: RQC P-site tRNA stabilizing factor (86 aa).

The S4 RNA-binding domain occupies 1–62 (MRLDKFLKVS…QKLVTVQVNE (62 aa)).

It belongs to the RqcP family. In terms of assembly, associates with stalled 50S ribosomal subunits. Binds to RqcH, 23S rRNA and the P-site tRNA. Does not require RqcH for association with 50S subunits. Crystallized 50S subunits are variously associated with an A/P-site tRNA with or without RqcH, as well as with P- and E-site tRNAs but no RqcH. Displaced from the 50S subunit by puromycin but not thiostrepton.

In terms of biological role, key component of the ribosome quality control system (RQC), a ribosome-associated complex that mediates the extraction of incompletely synthesized nascent chains from stalled ribosomes and their subsequent degradation. RqcH recruits Ala-charged tRNA, and with RqcP directs the elongation of stalled nascent chains on 50S ribosomal subunits, leading to non-templated C-terminal alanine extensions (Ala tail). The Ala tail promotes nascent chain degradation. RqcP is associated with the translocation-like movement of the peptidyl-tRNA from the A-site into the P-site. RqcH, RqcP and charged tRNA(Ala) are necessary and sufficient to add an Ala tail to a model stalled nascent peptide; does not add Val. This chain is RQC P-site tRNA stabilizing factor, found in Bacillus subtilis (strain 168).